The following is a 93-amino-acid chain: Small ribosomal subunit protein uS19 (93 aa).

It belongs to the universal ribosomal protein uS19 family.

In terms of biological role, protein S19 forms a complex with S13 that binds strongly to the 16S ribosomal RNA. The sequence is that of Small ribosomal subunit protein uS19 from Mycobacteroides abscessus (strain ATCC 19977 / DSM 44196 / CCUG 20993 / CIP 104536 / JCM 13569 / NCTC 13031 / TMC 1543 / L948) (Mycobacterium abscessus).